Here is a 350-residue protein sequence, read N- to C-terminus: Protein TRIGALACTOSYLDIACYLGLYCEROL 1, chloroplastic (350 aa).

Positions 67-86 are disordered; it reads SMSMLEEETSTENNAPSQEA. The chain crosses the membrane as a helical span at residues 98–117; sequence YIWRGLSVPIIAGQVVLRIL. The Stromal portion of the chain corresponds to 118–136; the sequence is KGKIHWRNTLQQLERTGPK. The helical transmembrane segment at 137–157 threads the bilayer; that stretch reads SLGVCLLTSTFVGMAFTIQFV. The Chloroplast intermembrane segment spans residues 158-168; sequence REFTRLGLNRS. A helical membrane pass occupies residues 169-189; the sequence is IGGVLALAFSRELSPVITSIV. At 190–229 the chain is on the stromal side; sequence VAGRMGSAFAAELGTMQVSEQTDTLRVLGADPIDYLITPR. A helical membrane pass occupies residues 230–250; the sequence is VIASCLALPFLTLMCFTVGMA. The Chloroplast intermembrane portion of the chain corresponds to 251 to 288; the sequence is SSALLSDAVYGISINIIMDSAHRALRPWDIVSAMIKSQ. Residues 289-309 form a helical membrane-spanning segment; that stretch reads VFGAIISVISCSWGVTTTGGA. At 310–318 the chain is on the stromal side; that stretch reads KGVGESTTS. Residues 319–339 traverse the membrane as a helical segment; sequence AVVMSLVGIFIADFVLSSFFF. The Chloroplast intermembrane portion of the chain corresponds to 340–350; sequence QGAGDSLKNCV.

The protein belongs to the MlaE permease family. As to quaternary structure, permease subunit of the TGD complex, a lipid translocator at the inner chloroplast envelope membrane made of TGD1, TGD2 and TGD3. Interacts with TGD2 and TGD3 with an overall subunit stoichiometry of 2 TGD1, 2 TGD3 and 8 to 12 TGD2. Interacts with TGD5. In terms of tissue distribution, high levels in green tissues, but low levels in nongreen tissues such as roots.

The protein resides in the plastid. It localises to the chloroplast inner membrane. Required during embryogenesis. Permease involved in lipid transfer from the endoplasmic reticulum (ER) to plastids, and necessary for thylakoids formation. This Arabidopsis thaliana (Mouse-ear cress) protein is Protein TRIGALACTOSYLDIACYLGLYCEROL 1, chloroplastic.